We begin with the raw amino-acid sequence, 109 residues long: Movement protein (109 aa).

The segment at 1-28 (MDSFGRAPPLWPQSALPRVPGAAPSSSG) is disordered. The helical transmembrane segment at 34–54 (VGEIAIFTFVAVLALYLLWSW) threads the bilayer.

Belongs to the mastrevirus movement protein family. Interacts with the capsid protein (CP). Part of a MP-CP-viral DNA complex.

It localises to the host membrane. Functionally, involved in the viral transport within, and between cells. The chain is Movement protein from Sugarcane streak virus (isolate South Africa) (SSV).